The following is a 588-amino-acid chain: MKNNLPIKSRLLYKRLLSYVKPFWPVLLLGVLANILYSGIDAGFTYMTKLFLDKSFITIDLNFVKQIPLIVLIGITLRGLVSSLGSYCMTWVARSVVKVLRQTVFSHIIHLPADYYDEATSGQLLSKILYDVEQVAQVSADALTDFIQNICLVIGLLTVMMVICWQLSLMFLLTIPFVGIIVNYTNKRVRRISHKVQKTMGEVTEIASEAIEGYRVVRIFGGERYEITKFNKATEYSRKNDMKVAISKAINVSGVQLVIAIGIATIIMAAIHLSTVITISAGSFLAIIAAMLQLIKPMKTLTTLNATIQRGLAGAESVFNLLDLPLERNNGLILKEKIRGEIEFKHVYHAYRQGQNILHDVNFVIEAGTSVALVGHSGSGKTTIASLLPRFYELSQGMITLDGMPIQQLSLESLRKQMSLVSQNVTLFNDTLANNIAYGRFDASREQIITAAKLAYADEFIKQLPDGYDTRVGENGVLLSGGQRQRIAIARAILKDAPILILDEATSALDSESEHYIQAALEQVMKGRTTLIIAHRLSTIKHAHKIIVLQHGRIVEQGSHQELLDMDGHYAQLYKVQQFGRINEEVVA.

The next 6 helical transmembrane spans lie at Phe-23–Gly-43, Phe-56–Thr-76, Asp-141–Met-161, Val-162–Val-182, Leu-257–Ile-277, and Thr-278–Met-298. The ABC transmembrane type-1 domain occupies Leu-28–Arg-310. The 235-residue stretch at Ile-342 to Val-576 folds into the ABC transporter domain. Position 375 to 382 (Gly-375 to Thr-382) interacts with ATP.

Belongs to the ABC transporter superfamily. Lipid exporter (TC 3.A.1.106) family. Homodimer.

It localises to the cell inner membrane. It catalyses the reaction ATP + H2O + lipid A-core oligosaccharideSide 1 = ADP + phosphate + lipid A-core oligosaccharideSide 2.. Involved in lipopolysaccharide (LPS) biosynthesis. Translocates lipid A-core from the inner to the outer leaflet of the inner membrane. Transmembrane domains (TMD) form a pore in the inner membrane and the ATP-binding domain (NBD) is responsible for energy generation. The sequence is that of ATP-dependent lipid A-core flippase from Legionella pneumophila subsp. pneumophila (strain Philadelphia 1 / ATCC 33152 / DSM 7513).